The chain runs to 177 residues: Large ribosomal subunit protein uL6 (177 aa).

Belongs to the universal ribosomal protein uL6 family. As to quaternary structure, part of the 50S ribosomal subunit.

In terms of biological role, this protein binds to the 23S rRNA, and is important in its secondary structure. It is located near the subunit interface in the base of the L7/L12 stalk, and near the tRNA binding site of the peptidyltransferase center. The chain is Large ribosomal subunit protein uL6 from Bordetella petrii (strain ATCC BAA-461 / DSM 12804 / CCUG 43448).